Here is a 576-residue protein sequence, read N- to C-terminus: Lysine--tRNA ligase (576 aa).

The Mg(2+) site is built by E412 and E419.

It belongs to the class-II aminoacyl-tRNA synthetase family. As to quaternary structure, homodimer. It depends on Mg(2+) as a cofactor.

It is found in the cytoplasm. The enzyme catalyses tRNA(Lys) + L-lysine + ATP = L-lysyl-tRNA(Lys) + AMP + diphosphate. The protein is Lysine--tRNA ligase of Parabacteroides distasonis (strain ATCC 8503 / DSM 20701 / CIP 104284 / JCM 5825 / NCTC 11152).